The chain runs to 365 residues: WAT1-related protein At4g01440 (365 aa).

Transmembrane regions (helical) follow at residues 8–28 (WTPV…NALV), 40–60 (VIAT…AFFW), 72–92 (ILVQ…YFFL), 101–121 (TLAC…ALIF), 132–152 (AGMG…LLTM), 181–201 (WIIG…WMLI), 213–233 (YSST…LSLI), 249–269 (IVTI…GTSW), 277–297 (IFTS…DFLI), and 302–322 (IFLG…IFLL). 2 consecutive EamA domains span residues 25 to 144 (NALV…LICI) and 196 to 321 (GSWM…YIFL).

It belongs to the drug/metabolite transporter (DMT) superfamily. Plant drug/metabolite exporter (P-DME) (TC 2.A.7.4) family.

Its subcellular location is the membrane. This chain is WAT1-related protein At4g01440, found in Arabidopsis thaliana (Mouse-ear cress).